Consider the following 313-residue polypeptide: MKDHQKIILVGDGAVGSSYAFACVNLSIGQEFGIIDIDKDRTIGDAMDLSHAVPFSTPKKIYSANYSDCHDADLVVVTAGTAQKPGETRLDLVNRNIKIMKGIVDEVMASGFDGIFLIASNPVDILTYATWKFSGLPKERVIGSGTSLDTARFRMSIADYLKVDARNVHGYILGEHGDTQFPAWSHTTVGGLPITEWINEDEQGAMDTIFVSVRDAAYEIINKKGATFYGVAAALARITKAILNNENAILPLSVYLDGHYGMNDIYIGAPAVVNRQGVRHIVEMNLNDKEKEQMKNSADTLKKVLDDAMKQID.

NAD(+) contacts are provided by V15, D36, R41, and Y66. Substrate-binding positions include Q83, R89, and 121-124; that span reads NPVD. NAD(+) is bound by residues 119–121 and S144; that span reads ASN. Residue 149 to 152 coordinates substrate; sequence DTAR. Beta-D-fructose 1,6-bisphosphate contacts are provided by R154 and H169. The active-site Proton acceptor is H176. A Phosphotyrosine modification is found at Y218. Position 227 (T227) interacts with substrate.

This sequence belongs to the LDH/MDH superfamily. LDH family. As to quaternary structure, homotetramer.

It is found in the cytoplasm. It carries out the reaction (S)-lactate + NAD(+) = pyruvate + NADH + H(+). It functions in the pathway fermentation; pyruvate fermentation to lactate; (S)-lactate from pyruvate: step 1/1. Its activity is regulated as follows. Allosterically activated by fructose 1,6-bisphosphate (FBP). Catalyzes the conversion of lactate to pyruvate. The polypeptide is L-lactate dehydrogenase 1 (Listeria innocua serovar 6a (strain ATCC BAA-680 / CLIP 11262)).